The primary structure comprises 105 residues: MATLQQQKIRIRLKAFDRRLLDTSCEKIVDTANRTNATAIGPIPLPTKRRVYCVLRSPHVDKDSREHFETRTHRRIIDIYQPSSKTIDALMKLDLPAGVDIEVKL.

Belongs to the universal ribosomal protein uS10 family. As to quaternary structure, part of the 30S ribosomal subunit.

In terms of biological role, involved in the binding of tRNA to the ribosomes. The protein is Small ribosomal subunit protein uS10 of Gloeothece citriformis (strain PCC 7424) (Cyanothece sp. (strain PCC 7424)).